A 159-amino-acid polypeptide reads, in one-letter code: MKKNKANKNTSGNIAQNKKARHDYFLEDKFEAGLELQGWEIKSIRAGKVNITDAYIIIQNAEAYLVGCRISPLNQASTHVVAAPERARKLLLKKREIDRLMGARDRQGYSIVATSMYWKKCWVKLEIHLAKGKHAHDKRDTLKDKDWQRQKERMMKHSV.

The interval 138-159 (KRDTLKDKDWQRQKERMMKHSV) is disordered.

The protein belongs to the SmpB family.

Its subcellular location is the cytoplasm. Required for rescue of stalled ribosomes mediated by trans-translation. Binds to transfer-messenger RNA (tmRNA), required for stable association of tmRNA with ribosomes. tmRNA and SmpB together mimic tRNA shape, replacing the anticodon stem-loop with SmpB. tmRNA is encoded by the ssrA gene; the 2 termini fold to resemble tRNA(Ala) and it encodes a 'tag peptide', a short internal open reading frame. During trans-translation Ala-aminoacylated tmRNA acts like a tRNA, entering the A-site of stalled ribosomes, displacing the stalled mRNA. The ribosome then switches to translate the ORF on the tmRNA; the nascent peptide is terminated with the 'tag peptide' encoded by the tmRNA and targeted for degradation. The ribosome is freed to recommence translation, which seems to be the essential function of trans-translation. This Alteromonas mediterranea (strain DSM 17117 / CIP 110805 / LMG 28347 / Deep ecotype) protein is SsrA-binding protein.